Reading from the N-terminus, the 105-residue chain is Large ribosomal subunit protein uL24 (105 aa).

This sequence belongs to the universal ribosomal protein uL24 family. In terms of assembly, part of the 50S ribosomal subunit.

In terms of biological role, one of two assembly initiator proteins, it binds directly to the 5'-end of the 23S rRNA, where it nucleates assembly of the 50S subunit. One of the proteins that surrounds the polypeptide exit tunnel on the outside of the subunit. The chain is Large ribosomal subunit protein uL24 from Mycobacterium leprae (strain Br4923).